Consider the following 510-residue polypeptide: Bifunctional pantoate ligase/cytidylate kinase (510 aa).

The interval Met1–Val276 is pantoate--beta-alanine ligase. Met29–His36 serves as a coordination point for ATP. Catalysis depends on His36, which acts as the Proton donor. Gln61 provides a ligand contact to (R)-pantoate. Gln61 lines the beta-alanine pocket. Gly150–Asp153 is a binding site for ATP. (R)-pantoate is bound at residue Gln156. Residue Phe187 to Arg190 participates in ATP binding. The tract at residues Phe277–Glu510 is cytidylate kinase.

In the N-terminal section; belongs to the pantothenate synthetase family. This sequence in the C-terminal section; belongs to the cytidylate kinase family. Type 1 subfamily.

It is found in the cytoplasm. It carries out the reaction (R)-pantoate + beta-alanine + ATP = (R)-pantothenate + AMP + diphosphate + H(+). The catalysed reaction is CMP + ATP = CDP + ADP. The enzyme catalyses dCMP + ATP = dCDP + ADP. It participates in cofactor biosynthesis; (R)-pantothenate biosynthesis; (R)-pantothenate from (R)-pantoate and beta-alanine: step 1/1. Catalyzes the condensation of pantoate with beta-alanine in an ATP-dependent reaction via a pantoyl-adenylate intermediate. Functionally, catalyzes the transfer of a phosphate group from ATP to either CMP or dCMP to form CDP or dCDP and ADP, respectively. This chain is Bifunctional pantoate ligase/cytidylate kinase, found in Prochlorococcus marinus subsp. pastoris (strain CCMP1986 / NIES-2087 / MED4).